The sequence spans 551 residues: Formate--tetrahydrofolate ligase (551 aa).

An ATP-binding site is contributed by 54–61 (TPPGEGKT).

The protein belongs to the formate--tetrahydrofolate ligase family.

It catalyses the reaction (6S)-5,6,7,8-tetrahydrofolate + formate + ATP = (6R)-10-formyltetrahydrofolate + ADP + phosphate. It functions in the pathway one-carbon metabolism; tetrahydrofolate interconversion. This Myxococcus xanthus (strain DK1622) protein is Formate--tetrahydrofolate ligase.